A 56-amino-acid chain; its full sequence is Large ribosomal subunit protein uL30 (56 aa).

Belongs to the universal ribosomal protein uL30 family. Part of the 50S ribosomal subunit.

This is Large ribosomal subunit protein uL30 from Oleidesulfovibrio alaskensis (strain ATCC BAA-1058 / DSM 17464 / G20) (Desulfovibrio alaskensis).